The primary structure comprises 82 residues: Acyl carrier protein (82 aa).

The 76-residue stretch at 3 to 78 folds into the Carrier domain; that stretch reads QEIFERVKKV…KAVEHISEKV (76 aa). At serine 38 the chain carries O-(pantetheine 4'-phosphoryl)serine.

It belongs to the acyl carrier protein (ACP) family. In terms of processing, 4'-phosphopantetheine is transferred from CoA to a specific serine of apo-ACP by AcpS. This modification is essential for activity because fatty acids are bound in thioester linkage to the sulfhydryl of the prosthetic group.

The protein localises to the cytoplasm. The protein operates within lipid metabolism; fatty acid biosynthesis. Its function is as follows. Carrier of the growing fatty acid chain in fatty acid biosynthesis. This chain is Acyl carrier protein, found in Gloeothece citriformis (strain PCC 7424) (Cyanothece sp. (strain PCC 7424)).